The following is a 373-amino-acid chain: Glutamate 5-kinase 2 (373 aa).

Lysine 11 provides a ligand contact to ATP. Residues serine 51, aspartate 138, and asparagine 150 each contribute to the substrate site. ATP-binding positions include 170–171 (SD) and 212–218 (TGGMKSK). The PUA domain maps to 279 to 355 (EGDIVVHNES…TNQETAASSQ (77 aa)).

This sequence belongs to the glutamate 5-kinase family.

It localises to the cytoplasm. The catalysed reaction is L-glutamate + ATP = L-glutamyl 5-phosphate + ADP. It participates in amino-acid biosynthesis; L-proline biosynthesis; L-glutamate 5-semialdehyde from L-glutamate: step 1/2. In terms of biological role, catalyzes the transfer of a phosphate group to glutamate to form L-glutamate 5-phosphate. The polypeptide is Glutamate 5-kinase 2 (Bacillus licheniformis (strain ATCC 14580 / DSM 13 / JCM 2505 / CCUG 7422 / NBRC 12200 / NCIMB 9375 / NCTC 10341 / NRRL NRS-1264 / Gibson 46)).